Consider the following 37-residue polypeptide: Large ribosomal subunit protein bL36 (37 aa).

The protein belongs to the bacterial ribosomal protein bL36 family.

The protein is Large ribosomal subunit protein bL36 of Francisella tularensis subsp. mediasiatica (strain FSC147).